The following is a 286-amino-acid chain: Diaminopimelate epimerase (286 aa).

The substrate site is built by asparagine 13 and asparagine 66. The Proton donor role is filled by cysteine 75. Substrate contacts are provided by residues 76 to 77, asparagine 165, asparagine 198, and 216 to 217; these read GN and ER. The Proton acceptor role is filled by cysteine 225. 226–227 contacts substrate; that stretch reads GT.

It belongs to the diaminopimelate epimerase family. As to quaternary structure, homodimer.

The protein localises to the cytoplasm. It carries out the reaction (2S,6S)-2,6-diaminopimelate = meso-2,6-diaminopimelate. It functions in the pathway amino-acid biosynthesis; L-lysine biosynthesis via DAP pathway; DL-2,6-diaminopimelate from LL-2,6-diaminopimelate: step 1/1. Functionally, catalyzes the stereoinversion of LL-2,6-diaminopimelate (L,L-DAP) to meso-diaminopimelate (meso-DAP), a precursor of L-lysine and an essential component of the bacterial peptidoglycan. The protein is Diaminopimelate epimerase of Oceanobacillus iheyensis (strain DSM 14371 / CIP 107618 / JCM 11309 / KCTC 3954 / HTE831).